Consider the following 666-residue polypeptide: Probable potassium transport system protein Kup (666 aa).

12 consecutive transmembrane segments (helical) span residues 16–36 (GFII…LYTM), 58–78 (ISLI…LIAL), 100–120 (PWLI…GALT), 149–169 (IITT…GTGF), 173–193 (IFGP…FFNM), 221–241 (IFIL…YSDL), 253–273 (WPFV…WILA), 294–314 (VYLV…LISG), 343–363 (LYIP…VLAF), 373–393 (YGLA…YYLI), 399–419 (PILA…FFLA), and 424–444 (FMHG…VMFI).

Belongs to the HAK/KUP transporter (TC 2.A.72) family.

The protein resides in the cell membrane. The catalysed reaction is K(+)(in) + H(+)(in) = K(+)(out) + H(+)(out). In terms of biological role, transport of potassium into the cell. Likely operates as a K(+):H(+) symporter. The protein is Probable potassium transport system protein Kup of Streptococcus pyogenes serotype M3 (strain ATCC BAA-595 / MGAS315).